A 214-amino-acid chain; its full sequence is Putative ankyrin repeat protein RF_1081 (214 aa).

A compositionally biased stretch (polar residues) spans 1–14; that stretch reads MRKQQIPTLSTSAL. Residues 1–32 are disordered; it reads MRKQQIPTLSTSALDKSPGPGSPDSDIEMKST. The ANK repeat unit spans residues 67–135; that stretch reads NPNALLHEAA…EEPILVTKKD (69 aa).

The chain is Putative ankyrin repeat protein RF_1081 from Rickettsia felis (strain ATCC VR-1525 / URRWXCal2) (Rickettsia azadi).